A 301-amino-acid polypeptide reads, in one-letter code: 4-diphosphocytidyl-2-C-methyl-D-erythritol kinase (301 aa).

The active site involves lysine 18. 103 to 113 (PVAAGIGGGSA) lines the ATP pocket. Aspartate 145 is a catalytic residue.

This sequence belongs to the GHMP kinase family. IspE subfamily.

It carries out the reaction 4-CDP-2-C-methyl-D-erythritol + ATP = 4-CDP-2-C-methyl-D-erythritol 2-phosphate + ADP + H(+). It functions in the pathway isoprenoid biosynthesis; isopentenyl diphosphate biosynthesis via DXP pathway; isopentenyl diphosphate from 1-deoxy-D-xylulose 5-phosphate: step 3/6. In terms of biological role, catalyzes the phosphorylation of the position 2 hydroxy group of 4-diphosphocytidyl-2C-methyl-D-erythritol. The protein is 4-diphosphocytidyl-2-C-methyl-D-erythritol kinase of Bradyrhizobium sp. (strain BTAi1 / ATCC BAA-1182).